A 1353-amino-acid chain; its full sequence is MNVLVQGAVHALGYYEDGKYSREPDCYESIRDLIRYLREDGDDHTARIECGRHNLVEQDLVPMVKCEDLTDDEFDIAIRLMVNLCQPAISTMRGKPPADRDQWKMYWELEENLRRAKTAFSDAHFFTAIKKRIDNYFIDTEYEDRDERLRLVVERIVLLIKYVFSINPDTSEGRRTRIEDSSHDRVIIAFLESGIDKTLMHIANQPREKEFHVTILDIFALILKEQTAEDLATKSEEVSTAEQKKTEEEFRKIIENHVVKETQKRKSFSRFGGSYTIKGLKGISANSSQVVFKPIQNVEKHNFLDDRKAKKRAPRNRRPFEIDTNSHFASSEVRGMLRDMVIRIIETCFNRLMKSSKTTVFVQVQKTSQINYFFLIKFVLRFVRLSRQDHLLERISECIGVEAFHENNVQLTEYVENATTLKGVEAKSHGLKAQYALGAYNELVLLHRYIYEHAKEENERKFAKRALEHIVNVEEYRELPIFIIKKFSSSVLSNNFLRELVLTTHHYMKLVERFVKTGALKKVTKKVKVRKATKKSKMSEEDVRSEFDGMSKKDLDRLWEESKGLVLQILKKEVPEMRGMNPIDSQLDVPVDAQQKFAKLSIQRSLRSRGFPAAVGLYHASRALWPESFKRGLTDFQDSPGEEDQLQELEQLLKADMKKVAKDLKKAESCKTCDEDPAYKKYDKMDATALQSLWEQSTDTLARILSHELPESESTSPVNWQLDITPDVQQKFAMLAIQRALRARDLPAAVGLYHTSRKLWPGDEAIFGAPGIGVEEEIAELKAILEADLHEVAREMKVAEDRAEDPDEEDPAEPYDSEQEEEEEVPAWKVEEIDFQFDSYVCKFSNVDVLKWYVFLLNDFSKNSTELNQALVKMLHRIAFDLKLPIKLYQVSLFQVFSKVNEHFTHLSKDLRKSSRLYELYQFGFHLLKKFFSKFTGDLAIEALFWKGPRECFEIENGYGSWVKSREADIRVWTEDLEIELRNLYEEYRTMETRDGIDVLDFIEHNLSRARSRKKVAKKLIEFGFDLLGAKWKNSDKARMDSVLPIGDIQKWYDEWKEAGARGDLVNVLQEKLNEDLGMEISRKKILKQLAHMDILYEKPKKEKPLPQWDTGLIEELKKLKEQYDDIPDALNMLGVNIVRYVMKRLSEKKPTRQVERHLESLGATIPERSKKSEKNGKKFDDFLNDDDDDSENDVGGGSEDDEEEEIVMKSKRIIPDSEDEEEHIEQEEAQKKLEKVAEKPNTLMGMIAGRKRKLAQLESDSSDESDDDDSAEKEEKKLPAAEDDSDLEEDAVIYKRSYVDALLTGGSIAGNGITETRRDTSEEREDDDDEDPFTKKLTFKRRIVMSDNEDEA.

Disordered regions lie at residues 798 to 825, 1150 to 1291, and 1306 to 1335; these read VAED…EEEV, KPTR…LEED, and GGSI…DPFT. Positions 802–825 are enriched in acidic residues; that stretch reads RAEDPDEEDPAEPYDSEQEEEEEV. Basic and acidic residues-rich tracts occupy residues 1150–1160 and 1168–1182; these read KPTRQVERHLE and ERSK…KFDD. 2 stretches are compositionally biased toward acidic residues: residues 1183–1206 and 1217–1226; these read FLND…EEEE and DSEDEEEHIE. Over residues 1227–1239 the composition is skewed to basic and acidic residues; it reads QEEAQKKLEKVAE. 3 stretches are compositionally biased toward acidic residues: residues 1261-1273, 1282-1291, and 1323-1332; these read DSSD…DSAE, AEDDSDLEED, and EEREDDDDED.

This sequence belongs to the timeless family. Associates with the cohesin complex. Interacts with smc-1, smc-3, scc-1 and scc-3.

The protein localises to the nucleus. In terms of biological role, plays an important role in chromosome cohesion during both mitosis and meiosis. In prophase of meiosis, it is involved in the formation of the synaptonemal complex (SC) and specifically, in the diplotene and diakinesis phases of prophase, it stabilizes the association of homologous chromosomes during synapsis and sister chromatid cohesion. It regulates cohesin subunits to promote meiotic chromosome cohesion and localizes non-SMC (structural maintenance of chromosome) cohesin subunits to chromatin prior to or during pre-meiotic S phase. Implicated in influencing either the stability or loading of meiotic-specific cohesin subunit, rec8. Controls cell cycle exit and cell fusion to prevent the premature differentiation into adult cells. Specifically, regulates hypodermal seam cell identity. The chain is Protein timeless homolog from Caenorhabditis elegans.